The sequence spans 353 residues: Divinyl chlorophyll a/b light-harvesting protein PcbG (353 aa).

The next 6 helical transmembrane spans lie at 28 to 48 (FISSHIAHTGLICFGAGANTL), 64 to 84 (GLVVLPHLAGLGLGGISNGVF), 90 to 110 (LLVVAILHLILSGVYGGGGML), 204 to 224 (IMGGHAFLAFFMAAGGVFHIL), 244 to 264 (FVLSTSLAGAAYTAFVAALWC), and 308 to 328 (LTNVHFFIGFFYLQGHFFHGL).

This sequence belongs to the PsbB/PsbC family. IsiA/Pcb subfamily. In terms of assembly, the antenna complex consists of divinyl chlorophylls (a and b) and divinyl chlorophyll a/b binding proteins and binds more divinyl chlorophyll b than does the antenna complex from high-light-adapted Prochlorococcus. Also forms complexes with PSI, consisting of a PSI trimer with surrounded by a PcbG ring (probably with 18 subunits). Is the only subunit found in this ring under iron-replete conditions. It depends on divinyl chlorophyll a as a cofactor. Divinyl chlorophyll b is required as a cofactor.

Its subcellular location is the cellular thylakoid membrane. Functionally, the antenna complex functions as a light receptor, it captures and delivers excitation energy to photosystems I. The Prochlorales pcb genes are not related to higher plant LHCs. The polypeptide is Divinyl chlorophyll a/b light-harvesting protein PcbG (pcbG) (Prochlorococcus marinus (strain SARG / CCMP1375 / SS120)).